The sequence spans 103 residues: Large ribosomal subunit protein bL21 (103 aa).

It belongs to the bacterial ribosomal protein bL21 family. As to quaternary structure, part of the 50S ribosomal subunit. Contacts protein L20.

In terms of biological role, this protein binds to 23S rRNA in the presence of protein L20. In Marinobacter nauticus (strain ATCC 700491 / DSM 11845 / VT8) (Marinobacter aquaeolei), this protein is Large ribosomal subunit protein bL21.